The chain runs to 256 residues: Probable hydroxyacylglutathione hydrolase SPCC13B11.03c (256 aa).

Residues His-63, His-65, Asp-67, His-68, His-118, and Asp-139 each coordinate Zn(2+). Residues 148–150 (RFF), 178–180 (HEY), and 250–253 (RTLK) each bind substrate. His-178 is a binding site for Zn(2+).

This sequence belongs to the metallo-beta-lactamase superfamily. Glyoxalase II family. Zn(2+) serves as cofactor.

The protein localises to the cytoplasm. Its subcellular location is the nucleus. It catalyses the reaction an S-(2-hydroxyacyl)glutathione + H2O = a 2-hydroxy carboxylate + glutathione + H(+). The enzyme catalyses (R)-S-lactoylglutathione + H2O = (R)-lactate + glutathione + H(+). The protein operates within secondary metabolite metabolism; methylglyoxal degradation; (R)-lactate from methylglyoxal: step 2/2. Functionally, thiolesterase that catalyzes the hydrolysis of S-D-lactoylglutathione to form glutathione and D-lactic acid. Involved in the metabolism of methylglyoxal, a toxic compound for yeast proliferation, by converting methylglyoxal to lactate via S-D-lactoylglutathione by sequential enzyme reactions catalyzed by glyoxalase I and glyoxalase II. The sequence is that of Probable hydroxyacylglutathione hydrolase SPCC13B11.03c from Schizosaccharomyces pombe (strain 972 / ATCC 24843) (Fission yeast).